The following is a 450-amino-acid chain: tRNA modification GTPase MnmE (450 aa).

(6S)-5-formyl-5,6,7,8-tetrahydrofolate is bound by residues Arg-21, Glu-80, and Lys-119. Residues 213-373 (GIKVVIIGKP…LEEEIIKSVK (161 aa)) enclose the TrmE-type G domain. Asn-223 contributes to the K(+) binding site. Residues 223-228 (NVGKST), 242-248 (TDIPGTT), and 267-270 (DTAG) contribute to the GTP site. Ser-227 provides a ligand contact to Mg(2+). Residues Thr-242, Ile-244, and Thr-247 each coordinate K(+). Thr-248 is a binding site for Mg(2+). Lys-450 provides a ligand contact to (6S)-5-formyl-5,6,7,8-tetrahydrofolate.

This sequence belongs to the TRAFAC class TrmE-Era-EngA-EngB-Septin-like GTPase superfamily. TrmE GTPase family. Homodimer. Heterotetramer of two MnmE and two MnmG subunits. It depends on K(+) as a cofactor.

It is found in the cytoplasm. Functionally, exhibits a very high intrinsic GTPase hydrolysis rate. Involved in the addition of a carboxymethylaminomethyl (cmnm) group at the wobble position (U34) of certain tRNAs, forming tRNA-cmnm(5)s(2)U34. This is tRNA modification GTPase MnmE from Pseudothermotoga lettingae (strain ATCC BAA-301 / DSM 14385 / NBRC 107922 / TMO) (Thermotoga lettingae).